The primary structure comprises 76 residues: uncharacterized protein (76 aa).

It to L.innocua lin1255, lin1742 and lin2600.

This is an uncharacterized protein from Listeria innocua serovar 6a (strain ATCC BAA-680 / CLIP 11262).